The sequence spans 115 residues: Large ribosomal subunit protein bL20 (115 aa).

This sequence belongs to the bacterial ribosomal protein bL20 family.

Functionally, binds directly to 23S ribosomal RNA and is necessary for the in vitro assembly process of the 50S ribosomal subunit. It is not involved in the protein synthesizing functions of that subunit. In Borrelia garinii subsp. bavariensis (strain ATCC BAA-2496 / DSM 23469 / PBi) (Borreliella bavariensis), this protein is Large ribosomal subunit protein bL20.